The following is a 1180-amino-acid chain: RecBCD enzyme subunit RecB (1180 aa).

Residues 2 to 450 (SDVAETLDPL…YTLDTNWRSA (449 aa)) enclose the UvrD-like helicase ATP-binding domain. The segment at 2–853 (SDVAETLDPL…KGEPQDAAGL (852 aa)) is ATPase, DNA-binding and helicase activity, interacts with RecC. Residue 23 to 30 (ASAGTGKT) coordinates ATP. A DNA-binding region spans residues 252–254 (IDR). Tryptophan 447 contacts ATP. The UvrD-like helicase C-terminal domain maps to 480-746 (SAGKNQALRF…QIVTIHKSKG (267 aa)). DNA-binding regions lie at residues 511–512 (VG), 560–561 (SR), and arginine 761. The segment at 900 to 1180 (NWRVTSYSGL…MFAGMTLEEA (281 aa)) is nuclease activity, interacts with RecD and RecA. Residues histidine 956, aspartate 1067, aspartate 1080, and tyrosine 1081 each contribute to the Mg(2+) site. The For nuclease activity role is filled by aspartate 1080.

The protein belongs to the helicase family. UvrD subfamily. Heterotrimer of RecB, RecC and RecD. All subunits contribute to DNA-binding. The C-terminus interacts with RecA. Interacts with YgbT (Cas1). In terms of assembly, (Microbial infection) Lambda virus GamS protein interacts with the enzyme without displacing any of the subunits. Mg(2+) is required as a cofactor.

The enzyme catalyses Exonucleolytic cleavage (in the presence of ATP) in either 5'- to 3'- or 3'- to 5'-direction to yield 5'-phosphooligonucleotides.. It carries out the reaction Couples ATP hydrolysis with the unwinding of duplex DNA by translocating in the 3'-5' direction.. The catalysed reaction is ATP + H2O = ADP + phosphate + H(+). Its activity is regulated as follows. After reacting with DNA bearing a Chi site the holoenzyme is disassembled and loses exonuclease activity, DNA unwinding and Chi-directed DNA cleavage; RecB remains complexed with ssDNA, which may prevent holoenzyme reassembly. High levels of Mg(2+) (13 mM MgCl(2+)) or incubation with DNase allows holoenzyme reassembly, suggesting it is DNA bound to RecB that prevents reassembly. With respect to regulation, (Microbial infection) RecBCD is inhibited by the lambda virus gam protein (both GamL and GamS isoforms); in vitro a short preincubation prior to adding DNA results in maximal inhibition. Functionally, a helicase/nuclease that prepares dsDNA breaks (DSB) for recombinational DNA repair. Binds to DSBs and unwinds DNA via a rapid (&gt;1 kb/second) and highly processive (&gt;30 kb) ATP-dependent bidirectional helicase. Unwinds dsDNA until it encounters a Chi (crossover hotspot instigator, 5'-GCTGGTGG-3') sequence from the 3' direction. Cuts ssDNA a few nucleotides 3' to Chi site, by nicking one strand or switching the strand degraded (depending on the reaction conditions). The properties and activities of the enzyme are changed at Chi. The Chi-altered holoenzyme produces a long 3'-ssDNA overhang which facilitates RecA-binding to the ssDNA for homologous DNA recombination and repair. Holoenzyme degrades any linearized DNA that is unable to undergo homologous recombination. In the holoenzyme this subunit contributes ATPase, 3'-5' helicase, exonuclease activity and loads RecA onto ssDNA. The RecBC complex requires the RecD subunit for nuclease activity, but can translocate along ssDNA in both directions. The RecBCD complex does not unwind G-quadruplex DNA. Probably interacts with a component of retron Ec48 which moniters RecBCD stability; when RecB is missing or impaired the retron is activated and becomes toxic. This chain is RecBCD enzyme subunit RecB, found in Escherichia coli (strain K12).